The following is a 140-amino-acid chain: Large ribosomal subunit protein uL14 (140 aa).

It belongs to the universal ribosomal protein uL14 family.

The sequence is that of Large ribosomal subunit protein uL14 (RPL23) from Brugia malayi (Filarial nematode worm).